Consider the following 389-residue polypeptide: Flagellar P-ring protein (389 aa).

Residues 1–33 (MRPLVAARRRAAACCALAACMLALAFAPAAARA) form the signal peptide.

It belongs to the FlgI family. As to quaternary structure, the basal body constitutes a major portion of the flagellar organelle and consists of four rings (L,P,S, and M) mounted on a central rod.

It localises to the periplasm. The protein resides in the bacterial flagellum basal body. In terms of biological role, assembles around the rod to form the L-ring and probably protects the motor/basal body from shearing forces during rotation. This Burkholderia pseudomallei (strain K96243) protein is Flagellar P-ring protein.